Consider the following 604-residue polypeptide: ERAD-associated E3 ubiquitin-protein ligase component HRD3B (604 aa).

The N-terminal stretch at 1-25 is a signal peptide; sequence MRVSGQSIIAISLFTLSLYIHRVQA. The disordered stretch occupies residues 48-69; that stretch reads ESSDFDEFGESEPKSEEELDPG. 2 N-linked (GlcNAc...) asparagine glycosylation sites follow: N78 and N105. Sel1-like repeat units lie at residues 125–160, 244–274, 279–307, 311–344, 346–380, 464–492, and 498–528; these read PHAQSVMGFVYGIGMMRETSRSKSILHHHFAAAGGN, VAMHKIGLFYYFGLRGLRRDHAKALYWFSKA, LGYLYVKGYGVDKRNYTKAREYFEMAANN, SGHYNLGVLYLKGTGVKKDVRHATKYFFVAANAG, PKAFYQLAKMFHTGVGLTKNLEMATTFYKLVAERG, AALLIGDAYYYGRGTERDFVRAAEAYMYA, and AQAMFNLGYMHEHGEGLPFDLHLAKRYYDQA. An N-linked (GlcNAc...) asparagine glycan is attached at N293.

The protein belongs to the sel-1 family.

Its function is as follows. May be involved in the endoplasmic reticulum (ER) quality control system called ER-associated degradation (ERAD). The sequence is that of ERAD-associated E3 ubiquitin-protein ligase component HRD3B from Arabidopsis thaliana (Mouse-ear cress).